Reading from the N-terminus, the 425-residue chain is Serine--tRNA ligase (425 aa).

Residue 229–231 (TSE) coordinates L-serine. ATP contacts are provided by residues 259-261 (RKE) and Val-275. Position 282 (Glu-282) interacts with L-serine. 349–352 (EVTS) serves as a coordination point for ATP. Thr-384 contacts L-serine.

Belongs to the class-II aminoacyl-tRNA synthetase family. Type-1 seryl-tRNA synthetase subfamily. As to quaternary structure, homodimer. The tRNA molecule binds across the dimer.

Its subcellular location is the cytoplasm. The enzyme catalyses tRNA(Ser) + L-serine + ATP = L-seryl-tRNA(Ser) + AMP + diphosphate + H(+). It carries out the reaction tRNA(Sec) + L-serine + ATP = L-seryl-tRNA(Sec) + AMP + diphosphate + H(+). It functions in the pathway aminoacyl-tRNA biosynthesis; selenocysteinyl-tRNA(Sec) biosynthesis; L-seryl-tRNA(Sec) from L-serine and tRNA(Sec): step 1/1. Functionally, catalyzes the attachment of serine to tRNA(Ser). Is also able to aminoacylate tRNA(Sec) with serine, to form the misacylated tRNA L-seryl-tRNA(Sec), which will be further converted into selenocysteinyl-tRNA(Sec). This chain is Serine--tRNA ligase, found in Borrelia garinii subsp. bavariensis (strain ATCC BAA-2496 / DSM 23469 / PBi) (Borreliella bavariensis).